The chain runs to 116 residues: Large ribosomal subunit protein bL17 (116 aa).

It belongs to the bacterial ribosomal protein bL17 family. As to quaternary structure, part of the 50S ribosomal subunit. Contacts protein L32.

The protein is Large ribosomal subunit protein bL17 of Prochlorococcus marinus subsp. pastoris (strain CCMP1986 / NIES-2087 / MED4).